We begin with the raw amino-acid sequence, 212 residues long: Ribonuclease HII (212 aa).

The RNase H type-2 domain occupies 12-201 (ELVAGVDEVG…VRAMLEQVSI (190 aa)). A divalent metal cation contacts are provided by Asp-18, Glu-19, and Asp-110.

This sequence belongs to the RNase HII family. It depends on Mn(2+) as a cofactor. Mg(2+) is required as a cofactor.

Its subcellular location is the cytoplasm. The catalysed reaction is Endonucleolytic cleavage to 5'-phosphomonoester.. Its function is as follows. Endonuclease that specifically degrades the RNA of RNA-DNA hybrids. This Stutzerimonas stutzeri (strain A1501) (Pseudomonas stutzeri) protein is Ribonuclease HII.